Consider the following 107-residue polypeptide: U1-lycotoxin-Ls1b (107 aa).

The N-terminal stretch at 1–20 (MMKVLVVFALLVTLISYSSS) is a signal peptide. A propeptide spanning residues 21–41 (EGIDDLEADELLSLMANEQTR) is cleaved from the precursor. Disulfide bonds link C44/C59, C51/C68, C58/C86, and C70/C84.

Belongs to the neurotoxin 19 (CSTX) family. 04 (U1-Lctx) subfamily. Expressed by the venom gland.

It localises to the secreted. The protein is U1-lycotoxin-Ls1b of Lycosa singoriensis (Wolf spider).